Here is a 446-residue protein sequence, read N- to C-terminus: Rhamnogalacturonase A (446 aa).

An N-terminal signal peptide occupies residues M1 to G18. A disulfide bond links C39 and C65. N50, N115, and N124 each carry an N-linked (GlcNAc...) asparagine glycan. Catalysis depends on D216, which acts as the Proton donor. C218 and C235 are joined by a disulfide. 3 N-linked (GlcNAc...) asparagine glycosylation sites follow: N236, N281, and N318. Cystine bridges form between C341–C347 and C369–C378.

It belongs to the glycosyl hydrolase 28 family.

Its subcellular location is the secreted. The enzyme catalyses Endohydrolysis of alpha-D-GalA-(1-&gt;2)-alpha-L-Rha glycosidic bond in the rhamnogalacturonan I backbone with initial inversion of anomeric configuration releasing oligosaccharides with beta-D-GalA at the reducing end.. Functionally, pectinolytic enzymes consist of four classes of enzymes: pectine lyase, polygalacturonase, pectin methylesterase and rhamnogalacturonase. Hydrolyzes alpha-D-galacturonopyranosyl-(1,2)-alpha-L-rhamnopyranosyl linkages in the backbone of the hairy regions of pectins. In Aspergillus niger, this protein is Rhamnogalacturonase A (rhgA).